Here is a 441-residue protein sequence, read N- to C-terminus: Ribulose bisphosphate carboxylase large chain (441 aa).

The residue at position 5 (lysine 5) is an N6,N6,N6-trimethyllysine. Substrate-binding residues include asparagine 114 and threonine 164. Residue lysine 166 is the Proton acceptor of the active site. Lysine 168 lines the substrate pocket. 3 residues coordinate Mg(2+): lysine 192, aspartate 194, and glutamate 195. Lysine 192 is subject to N6-carboxylysine. The Proton acceptor role is filled by histidine 285. Substrate-binding residues include arginine 286, histidine 318, and serine 370.

The protein belongs to the RuBisCO large chain family. Type I subfamily. In terms of assembly, heterohexadecamer of 8 large chains and 8 small chains; disulfide-linked. The disulfide link is formed within the large subunit homodimers. Requires Mg(2+) as cofactor. In terms of processing, the disulfide bond which can form in the large chain dimeric partners within the hexadecamer appears to be associated with oxidative stress and protein turnover.

Its subcellular location is the plastid. The protein resides in the chloroplast. It catalyses the reaction 2 (2R)-3-phosphoglycerate + 2 H(+) = D-ribulose 1,5-bisphosphate + CO2 + H2O. The enzyme catalyses D-ribulose 1,5-bisphosphate + O2 = 2-phosphoglycolate + (2R)-3-phosphoglycerate + 2 H(+). Functionally, ruBisCO catalyzes two reactions: the carboxylation of D-ribulose 1,5-bisphosphate, the primary event in carbon dioxide fixation, as well as the oxidative fragmentation of the pentose substrate in the photorespiration process. Both reactions occur simultaneously and in competition at the same active site. The chain is Ribulose bisphosphate carboxylase large chain from Drosera dichrosepala (Rusty sundew).